Here is a 2201-residue protein sequence, read N- to C-terminus: Voltage-dependent T-type calcium channel subunit alpha-1I (2201 aa).

Residues 1–45 (MADSNLPPSSAAAPAPEPGITEQPGPRSPPPSPPGLEEPLEGTNP) form a disordered region. The Cytoplasmic portion of the chain corresponds to 1–76 (MADSNLPPSS…RNWCIKMVCN (76 aa)). Residues 26–36 (PRSPPPSPPGL) are compositionally biased toward pro residues. The stretch at 64-399 (TSPRNWCIKM…LCLVVIATQF (336 aa)) is one I repeat. The helical transmembrane segment at 77–97 (PWFECVSMLVILLNCVTLGMY) threads the bilayer. The Extracellular segment spans residues 98 to 115 (QPCDDMECLSDRCKILQV). A helical membrane pass occupies residues 116-137 (FDDFIFIFFAMEMVLKMVALGI). The Cytoplasmic portion of the chain corresponds to 138–146 (FGKKCYLGD). Residues 147-166 (TWNRLDFFIVMAGMVEYSLD) form a helical membrane-spanning segment. Residues 167-171 (LQNIN) lie on the Extracellular side of the membrane. The N-linked (GlcNAc...) asparagine glycan is linked to N171. Residues 172 to 189 (LSAIRTVRVLRPLKAINR) traverse the membrane as a helical segment. Topologically, residues 190 to 209 (VPSMRILVNLLLDTLPMLGN) are cytoplasmic. Residues 210–230 (VLLLCFFVFFIFGIIGVQLWA) traverse the membrane as a helical segment. Over 231 to 371 (GLLRNRCFLE…YYVMDAHSFY (141 aa)) the chain is Extracellular. N-linked (GlcNAc...) asparagine glycosylation is found at N242 and N309. The helical transmembrane segment at 372–396 (NFIYFILLIIVGSFFMINLCLVVIA) threads the bilayer. Residues 397-598 (TQFSETKQRE…EKLRGIVDSK (202 aa)) lie on the Cytoplasmic side of the membrane. Disordered stretches follow at residues 463–500 (QAMG…TPHT) and 513–579 (PSSC…AARL). Residues 545-554 (SAEAEANGDG) show a composition bias toward low complexity. The II repeat unit spans residues 584–823 (WRETREKLRG…LLVAILVEGF (240 aa)). A helical membrane pass occupies residues 599–619 (YFNRGIMMAILVNTVSMGIEH). Residues 620–632 (HEQPEELTNILEI) lie on the Extracellular side of the membrane. A helical transmembrane segment spans residues 633-654 (CNVVFTSMFALEMILKLAAFGL). Residues 655-660 (FDYLRN) lie on the Cytoplasmic side of the membrane. Residues 661–679 (PYNIFDSIIVIISIWEIVG) traverse the membrane as a helical segment. The Extracellular segment spans residues 680 to 687 (QADGGLSV). Residues 688 to 711 (LRTFRLLRVLKLVRFMPALRRQLV) traverse the membrane as a helical segment. Residues 712–722 (VLMKTMDNVAT) are Cytoplasmic-facing. A helical transmembrane segment spans residues 723-743 (FCMLLMLFIFIFSILGMHIFG). The Extracellular portion of the chain corresponds to 744–795 (CKFSLRTDTGDTVPDRKNFDSLLWAIVTVFQILTQEDWNVVLYNGMASTTPW). The chain crosses the membrane as a helical span at residues 796–820 (ASLYFVALMTFGNYVLFNLLVAILV). Residues 821-1125 (EGFQAEGDAN…NKFRILCQTI (305 aa)) are Cytoplasmic-facing. Residues 936–969 (WGRSGTWASRRSSWNSLKHKPPSAEHESLLSGEG) are disordered. Residues 941-951 (TWASRRSSWNS) show a composition bias toward polar residues. A Phosphoserine modification is found at S1017. Residues 1116–1393 (NKFRILCQTI…MFVGVVVENF (278 aa)) form an III repeat. The helical transmembrane segment at 1126–1148 (IAHKLFDYVVLAFIFLNCITIAL) threads the bilayer. Residues 1149 to 1166 (ERPQIEAGSTERIFLTVS) are Extracellular-facing. A helical membrane pass occupies residues 1167–1187 (NYIFTAIFVGEMTLKVVSLGL). The Cytoplasmic portion of the chain corresponds to 1188 to 1197 (YFGEQAYLRS). Residues 1198-1217 (SWNVLDGFLVFVSIIDIVVS) traverse the membrane as a helical segment. At 1218–1231 (VASAGGAKILGVLR) the chain is on the extracellular side. The chain crosses the membrane as a helical span at residues 1232 to 1253 (VLRLLRTLRPLRVISRAPGLKL). Residues 1254 to 1263 (VVETLISSLK) lie on the Cytoplasmic side of the membrane. The helical transmembrane segment at 1264-1287 (PIGNIVLICCAFFIIFGILGVQLF) threads the bilayer. Topologically, residues 1288–1364 (KGKFYHCLGV…DQQPVTNHNP (77 aa)) are extracellular. 2 N-linked (GlcNAc...) asparagine glycosylation sites follow: N1301 and N1304. A helical transmembrane segment spans residues 1365–1390 (WMLLYFISFLLIVSFFVLNMFVGVVV). The Cytoplasmic segment spans residues 1391–1445 (ENFHKCRQHQEAEEARRREEKRLRRLEKKRRKAQRLPYYATYCPTRLLIHSMCTS). An IV repeat occupies 1431 to 1692 (TYCPTRLLIH…VVVAVLMKHL (262 aa)). The chain crosses the membrane as a helical span at residues 1446 to 1466 (HYLDIFITFIICLNVVTMSLE). Over 1467 to 1480 (HYNQPTSLETALKY) the chain is Extracellular. A helical transmembrane segment spans residues 1481–1502 (CNYMFTTVFVLEAVLKLVAFGL). Residues 1503 to 1509 (RRFFKDR) lie on the Cytoplasmic side of the membrane. A helical transmembrane segment spans residues 1510-1528 (WNQLDLAIVLLSVMGITLE). The Extracellular segment spans residues 1529 to 1542 (EIEINAALPINPTI). The helical transmembrane segment at 1543 to 1566 (IRIMRVLRIARVLKLLKMATGMRA) threads the bilayer. At 1567–1580 (LLDTVVQALPQVGN) the chain is on the cytoplasmic side. A helical transmembrane segment spans residues 1581–1601 (LGLLFMLLFFIYAALGVELFG). Over 1602 to 1664 (KLVCNDENPC…RSCLSSLQFV (63 aa)) the chain is Extracellular. The helical transmembrane segment at 1665-1692 (SPLYFVSFVLTAQFVLINVVVAVLMKHL) threads the bilayer. The Cytoplasmic portion of the chain corresponds to 1693-1835 (DDSNKEAQED…EVQLAETEAF (143 aa)). 5 disordered regions span residues 1846–1876 (LLGD…PEPM), 1916–1938 (LKHD…PLLQ), 1992–2045 (SDTS…TRRR), 2057–2105 (RGLR…HSET), and 2126–2201 (LTPA…KRKR). The span at 1992-2007 (SDTSLDASPSSSAGSL) shows a compositional bias: low complexity. 2 stretches are compositionally biased toward polar residues: residues 2008–2019 (QTTLEDSLTLSD) and 2066–2075 (HSSGGSTSPG). Residues 2077-2090 (THHDSMDPSDEEGR) are compositionally biased toward basic and acidic residues.

The protein belongs to the calcium channel alpha-1 subunit (TC 1.A.1.11) family. CACNA1I subfamily. In terms of assembly, interacts with CATSPER1 and CATSPER2, leading to suppress T-type calcium channel activity. In terms of processing, in response to raising of intracellular calcium, the T-type channels are activated by CaM-kinase II. As to expression, brain.

Its subcellular location is the membrane. The catalysed reaction is Ca(2+)(in) = Ca(2+)(out). Its function is as follows. Voltage-sensitive calcium channels (VSCC) mediate the entry of calcium ions into excitable cells and are also involved in a variety of calcium-dependent processes, including muscle contraction, hormone or neurotransmitter release, gene expression, cell motility, cell division and cell death. This channel gives rise to T-type calcium currents. T-type calcium channels belong to the 'low-voltage activated (LVA)' group and are strongly blocked by nickel and mibefradil. A particularity of this type of channels is an opening at quite negative potentials, and a voltage-dependent inactivation. T-type channels serve pacemaking functions in both central neurons and cardiac nodal cells and support calcium signaling in secretory cells and vascular smooth muscle. They may also be involved in the modulation of firing patterns of neurons which is important for information processing as well as in cell growth processes. Gates in voltage ranges similar to, but higher than alpha 1G or alpha 1H. Functionally, voltage-sensitive calcium channels (VSCC) mediate the entry of calcium ions into excitable cells and are also involved in a variety of calcium-dependent processes, including muscle contraction, hormone or neurotransmitter release, gene expression, cell motility, cell division and cell death. This channel gives rise to T-type calcium currents. This is Voltage-dependent T-type calcium channel subunit alpha-1I (Cacna1i) from Rattus norvegicus (Rat).